Consider the following 137-residue polypeptide: Flavodoxin (137 aa).

Positions 2–137 (VEIVYWSGTG…KELGEAAAKA (136 aa)) constitute a Flavodoxin-like domain.

It belongs to the flavodoxin family. FMN is required as a cofactor.

Its function is as follows. Low-potential electron donor to a number of redox enzymes. The chain is Flavodoxin from Megasphaera elsdenii.